The chain runs to 364 residues: Growth hormone secretagogue receptor type 1 (364 aa).

At 1-40 (MWNATPSEEPEPNVTLDLDWDASPGNDSLPDELLPLFPAP) the chain is on the extracellular side. Residues asparagine 13 and asparagine 26 are each glycosylated (N-linked (GlcNAc...) asparagine). Residues 41-66 (LLAGVTATCVALFVVGISGNLLTMLV) traverse the membrane as a helical segment. Over 67-72 (VSRFRE) the chain is Cytoplasmic. Residues 73–96 (LRTTTNLYLSSMAFSDLLIFLCMP) traverse the membrane as a helical segment. The Extracellular segment spans residues 97 to 117 (LDLVRLWQYRPWNFGDLLCKL). Residues cysteine 115 and cysteine 197 are joined by a disulfide bond. Residues 118–139 (FQFVSESCTYATVLTITALSVE) form a helical membrane-spanning segment. Residues 140–162 (RYFAICFPLRAKVVVTKGRVKLV) lie on the Cytoplasmic side of the membrane. Residues 163–183 (ILVIWAVAFCSAGPIFVLVGV) form a helical membrane-spanning segment. At 184–211 (EHENGTDPRDTNECRATEFAVRSGLLTV) the chain is on the extracellular side. The N-linked (GlcNAc...) asparagine glycan is linked to asparagine 187. A helical membrane pass occupies residues 212-235 (MVWVSSVFFFLPVFCLTVLYSLIG). The Cytoplasmic portion of the chain corresponds to 236–263 (RKLWRRRGDAAVGASLRDQNHKQTVKML). A helical transmembrane segment spans residues 264 to 285 (AVVVFAFILCWLPFHVGRYLFS). Over 286 to 302 (KSFEPGSLEIAQISQYC) the chain is Extracellular. The helical transmembrane segment at 303–326 (NLVSFVLFYLSAAINPILYNIMSK) threads the bilayer. Topologically, residues 327–364 (KYRVAVFKLLGFESFSQRKLSTLKDESSRAWTKSSINT) are cytoplasmic.

This sequence belongs to the G-protein coupled receptor 1 family.

The protein resides in the cell membrane. Functionally, receptor for ghrelin, coupled to G-alpha-11 proteins. Stimulates growth hormone secretion. Also binds other growth hormone releasing peptides (GHRP) (e.g. Met-enkephalin and GHRP-6) as well as non-peptide, low molecular weight secretagogues (e.g. L-692,429, MK-0677, adenosine). This is Growth hormone secretagogue receptor type 1 (Ghsr) from Rattus norvegicus (Rat).